We begin with the raw amino-acid sequence, 58 residues long: Pepsin-1 (58 aa).

A propeptide spans 1–41 (LLQVPLEKGQSAREYLQEQGLWEQYRLKYPYNPMAKFDPSF) (activation peptide).

This sequence belongs to the peptidase A1 family.

This chain is Pepsin-1, found in Thunnus orientalis (North Pacific bluefin tuna).